Here is a 364-residue protein sequence, read N- to C-terminus: Cell division protein FtsZ 1 (364 aa).

GTP is bound by residues 47 to 48 (GA), 97 to 99 (AGG), 134 to 136 (GTG), Glu165, Arg169, and Asp212.

Belongs to the FtsZ family. As to quaternary structure, homodimer. Polymerizes to form a dynamic ring structure in a strictly GTP-dependent manner. Interacts directly with several other division proteins.

The protein resides in the cytoplasm. Functionally, essential cell division protein that forms a contractile ring structure (Z ring) at the future cell division site. The regulation of the ring assembly controls the timing and the location of cell division. One of the functions of the FtsZ ring is to recruit other cell division proteins to the septum to produce a new cell wall between the dividing cells. Binds GTP and shows GTPase activity. The polypeptide is Cell division protein FtsZ 1 (Methanocaldococcus jannaschii (strain ATCC 43067 / DSM 2661 / JAL-1 / JCM 10045 / NBRC 100440) (Methanococcus jannaschii)).